The sequence spans 20 residues: Chrysophsin-3 (20 aa).

Position 20 is a histidine amide (His-20).

In terms of tissue distribution, gill.

The protein localises to the secreted. Functionally, has antibacterial activity against Gram-positive bacteria B.subtilis ATCC 6633, L.garvieae ATCC 49156 and S.iniae F-8502, and Gram-negative bacteria E.coli WT-2, V.anguillarum ATCC 19264, V.penaeicida KHA, V.harveyi ATCC 14126, V.vulnificus ATCC 33148, A.salmonicida NCMB 1102 and P.putida ATCC 12633. Has hemolytic activity against human red blood cells. Seems to disrupt the membranes by adopting an alpha helical conformation. May play a significant role in innate host defense. This chain is Chrysophsin-3, found in Pagrus major (Red sea bream).